Consider the following 468-residue polypeptide: Tyrosine-protein phosphatase YopH (468 aa).

Residues 127 to 194 (ARGHVSSHSH…TVSPYGPEAR (68 aa)) form a disordered region. Over residues 130–140 (HVSSHSHSVLH) the composition is skewed to low complexity. Residues 152 to 461 (SHLDPRTPPL…DVLIKLAEGQ (310 aa)) form the Tyrosine-protein phosphatase domain. The active-site Phosphocysteine intermediate is the cysteine 403.

The protein belongs to the protein-tyrosine phosphatase family. Non-receptor class subfamily. Monomer.

It localises to the secreted. It carries out the reaction O-phospho-L-tyrosyl-[protein] + H2O = L-tyrosyl-[protein] + phosphate. In terms of biological role, essential virulence determinant. This protein is a protein tyrosine phosphatase. The essential function of YopH in Yersinia pathogenesis is host-protein dephosphorylation. It contributes to the ability of the bacteria to resist phagocytosis by peritoneal macrophages. The sequence is that of Tyrosine-protein phosphatase YopH (yopH) from Yersinia enterocolitica.